A 178-amino-acid chain; its full sequence is Ribosome maturation factor RimP (178 aa).

It belongs to the RimP family.

The protein localises to the cytoplasm. Required for maturation of 30S ribosomal subunits. This is Ribosome maturation factor RimP from Corynebacterium glutamicum (strain ATCC 13032 / DSM 20300 / JCM 1318 / BCRC 11384 / CCUG 27702 / LMG 3730 / NBRC 12168 / NCIMB 10025 / NRRL B-2784 / 534).